Consider the following 231-residue polypeptide: Equistatin (231 aa).

An N-terminal signal peptide occupies residues 1-32 (MALSQNQAKFSKGFVVMIWVLFIACAITSTEA). 3 Thyroglobulin type-1 domains span residues 34 to 95 (LTKC…SPDC), 102 to 163 (LTLC…RPTC), and 167 to 231 (LSEC…RPTC). 9 cysteine pairs are disulfide-bonded: cysteine 37–cysteine 56, cysteine 67–cysteine 74, cysteine 76–cysteine 95, cysteine 105–cysteine 124, cysteine 135–cysteine 142, cysteine 144–cysteine 163, cysteine 170–cysteine 191, cysteine 202–cysteine 209, and cysteine 211–cysteine 231.

The protein belongs to the protease inhibitor I31 family.

It localises to the secreted. Functionally, potent inhibitor of papain-like cysteine proteinases (Ki=0.18-0.57 nM on papain), as well as of the aspartic proteinase cathepsin D (Ki=0.3-05 nM). This is Equistatin from Actinia equina (Beadlet anemone).